The primary structure comprises 138 residues: Oleosin G (138 aa).

Helical transmembrane passes span 14–34, 48–68, and 69–89; these read ILGF…TGLT, VLIF…VAVA, and GFLS…WLYN. A Proline-knot motif is present at residues 47–58; it reads PVLIFFSPILIP.

The protein belongs to the oleosin family. Expressed in megagametophytes (at protein level).

Its subcellular location is the lipid droplet. The protein localises to the membrane. This is Oleosin G from Pinus massoniana (Chinese red pine).